The chain runs to 940 residues: Lon protease homolog 1, mitochondrial (940 aa).

The transit peptide at 1-61 directs the protein to the mitochondrion; the sequence is MLKLFTSSAS…AFFCSEPTNG (61 aa). The interval 70-90 is disordered; it reads KAVESDSEVSDSKSSSAIVPT. Position 74 is a phosphoserine (Ser-74). One can recognise a Lon N-terminal domain in the interval 100–309; it reads VLALPVPHRP…LTLELMKKEM (210 aa). 464–471 serves as a coordination point for ATP; that stretch reads GPPGVGKT. In terms of domain architecture, Lon proteolytic spans 751–935; the sequence is QTPVGVVMGL…GKIFELAFGY (185 aa). Active-site residues include Ser-841 and Lys-884.

Belongs to the peptidase S16 family. In terms of assembly, homohexamer or homoheptamer. Organized in a ring with a central cavity.

The protein resides in the mitochondrion matrix. It catalyses the reaction Hydrolysis of proteins in presence of ATP.. Functionally, ATP-dependent serine protease that mediates the selective degradation of misfolded, unassembled or oxidatively damaged polypeptides as well as certain short-lived regulatory proteins in the mitochondrial matrix. May also have a chaperone function in the assembly of inner membrane protein complexes. Participates in the regulation of mitochondrial gene expression and in the maintenance of the integrity of the mitochondrial genome. Binds to mitochondrial DNA in a site-specific manner. This is Lon protease homolog 1, mitochondrial (LON1) from Arabidopsis thaliana (Mouse-ear cress).